Here is a 334-residue protein sequence, read N- to C-terminus: tRNA dimethylallyltransferase (334 aa).

23 to 30 serves as a coordination point for ATP; it reads GPTGAGKT. 25-30 is a substrate binding site; the sequence is TGAGKT. Interaction with substrate tRNA regions lie at residues 53–56 and 177–181; these read DSAL and QRVQR.

This sequence belongs to the IPP transferase family. In terms of assembly, monomer. Mg(2+) is required as a cofactor.

The catalysed reaction is adenosine(37) in tRNA + dimethylallyl diphosphate = N(6)-dimethylallyladenosine(37) in tRNA + diphosphate. In terms of biological role, catalyzes the transfer of a dimethylallyl group onto the adenine at position 37 in tRNAs that read codons beginning with uridine, leading to the formation of N6-(dimethylallyl)adenosine (i(6)A). In Polynucleobacter necessarius subsp. necessarius (strain STIR1), this protein is tRNA dimethylallyltransferase.